Here is a 595-residue protein sequence, read N- to C-terminus: Probable translation initiation factor IF-2 (595 aa).

One can recognise a tr-type G domain in the interval Leu11–Leu225. The interval Gly20–Thr27 is G1. A GTP-binding site is contributed by Gly20 to Thr27. The G2 stretch occupies residues Gly45 to His49. Residues Asp81–Gly84 are G3. GTP-binding positions include Asp81–His85 and Asn135–Asp138. Residues Asn135–Asp138 are G4. Residues Ser203–Leu205 form a G5 region.

Belongs to the TRAFAC class translation factor GTPase superfamily. Classic translation factor GTPase family. IF-2 subfamily.

Function in general translation initiation by promoting the binding of the formylmethionine-tRNA to ribosomes. Seems to function along with eIF-2. This chain is Probable translation initiation factor IF-2 (infB), found in Archaeoglobus fulgidus (strain ATCC 49558 / DSM 4304 / JCM 9628 / NBRC 100126 / VC-16).